Reading from the N-terminus, the 833-residue chain is MPIMYNTGEWFKVRPDYYRKVELATPDWPLDLDLEYMWVEVAPYGGPLAVTRDPTKLVPVKGNARPMIRIFDTTGREMGHILWNHGKLIAMGWSDMEELICIQENATVFVYDMFGREKESYSIGDEASVTKIVEGKVFQSSAGTGVAVMTTSGRVFLKQNSSKTERKLPDIPNSSMNCSCWEIVTEGRNSYCLLGRDREVIKLFPGETVGTITANLFEKPHERIIKISVSYNHQHLALYTNTGLLWLGSVDMRQKYCEFDTGRKDMPLQMEWIMNSDNSEADAVVISYPSYLLIVNRNADRSDFPYDPVMFLVAEMDGVRIITQSSHEIIQRLPKCVENIFAVNSQEPASYLFEAQKKFEEKSYKSDEYLSMCREKIDLAVSECIEAASYEFCPETQKSLLRTAYFGKGFIRNHNPDEYMRIMRILRVLNTLRHERIAMPITFKQFSHLNTEVILSRLVFRKHYAIAIQVAKHLNLPESWILEHWAYHKVMNDPNDTEVARKITEKFKNPSVEGISFCNIASKAHQAGRDDLAIKLLELESRASLHVPLLLKMRKFDRAVGSATQSGDTELITQVLLEMKMHMMLSNLHMTIRDHPLALNIYKKIMRESNRAGLYGIYNTEDDQKAIAEYHFQNAIETEGLESNLSMIGNAYAQGRCTLEAELCADTSRLIKLQKTLSTKYNVSLNGLSIHETIQELLLIGELKEAERIRSEFKVPDRRFWWLRILTLSSQHKWEELEKLAKSKKSPIGYDPFVEVCLKQDNVMEARKYIPRCRDNRRVVWYMRANLFNEAIDSAFEQRDVHSLFELQKNQAIVNNGTLLSKVCDCIAMLEGK.

The protein belongs to the VPS16 family. As to quaternary structure, component of the homotypic fusion and vacuole protein sorting (HOPS) complex, composed of Vps16A, car/Vps33A, dor/Vps18, Vps39, Vps11 and lt/Vps41. Interacts with Syx17 (via SNARE domain); the interaction may involve multiple components of the HOPS complex and may promote assembly of the Syx17-Snap29-Vamp7 trans-SNARE complex. Component of the class C core vacuole/endosome tethering (CORVET) complex composed of at least Vps8, dor/Vps18, car/Vps33A and Vps16A; unlike in other species, Vps11 is not part of the Drosophila complex. Due to the reduced number of components the Drosophila CORVET complex is often referred to as the miniCORVET complex. The tethering complex core made up of Vps16A, car/Vps33A and dor/Vps18 and shared by both HOPS and CORVET, preferentially associates with CORVET-specific Vps8 over HOPS-specific lt/Vps41. Interacts with Rab2 (GTP-bound form).

It is found in the late endosome membrane. Its subcellular location is the lysosome membrane. The protein localises to the cytoplasmic vesicle. It localises to the autophagosome. Core component of the class C core vacuole/endosome tethering (CORVET) and the homotypic fusion and vacuole protein sorting (HOPS) tethering complexes involved in endo-lysosomal vesicle trafficking and lysosome biogenesis. The CORVET complex facilitates docking and fusion of endosomal vesicles during endosome maturation, acts upstream of HOPS, but is not involved in autophagic flux. The CORVET complex may cooperate with the early endosomal tether Rbsn-5 to mediate endosomal fusion. The HOPS complex facilitates docking and fusion of lysosomes with late endosomes and several other types of vesicles. The HOPS complex is also involved in autophagy and crinophagy (the elimination of unused secretory granules through their fusion with lysosomes). The HOPS complex mediates autophagocitic flux, probably by binding autophagosome-associated Syx17/syntaxin 17, promoting assembly of the trans-SNARE complex and instigating autophagosome-lysosome fusion. Independent of Syx17/syntaxin 17, HOPS is involved in biosynthetic transport to lysosomes and lysosome-related organelles such as eye-pigment granules. Required for endocytic degradation of boss/bride of sevenless and N/Notch in developing ommatidia. This is Vacuolar protein sorting-associated protein 16 homolog from Drosophila melanogaster (Fruit fly).